Consider the following 229-residue polypeptide: Enolase-phosphatase E1 (229 aa).

This sequence belongs to the HAD-like hydrolase superfamily. MasA/MtnC family. In terms of assembly, monomer. It depends on Mg(2+) as a cofactor.

It carries out the reaction 5-methylsulfanyl-2,3-dioxopentyl phosphate + H2O = 1,2-dihydroxy-5-(methylsulfanyl)pent-1-en-3-one + phosphate. The protein operates within amino-acid biosynthesis; L-methionine biosynthesis via salvage pathway; L-methionine from S-methyl-5-thio-alpha-D-ribose 1-phosphate: step 3/6. Its pathway is amino-acid biosynthesis; L-methionine biosynthesis via salvage pathway; L-methionine from S-methyl-5-thio-alpha-D-ribose 1-phosphate: step 4/6. Its function is as follows. Bifunctional enzyme that catalyzes the enolization of 2,3-diketo-5-methylthiopentyl-1-phosphate (DK-MTP-1-P) into the intermediate 2-hydroxy-3-keto-5-methylthiopentenyl-1-phosphate (HK-MTPenyl-1-P), which is then dephosphorylated to form the acireductone 1,2-dihydroxy-3-keto-5-methylthiopentene (DHK-MTPene). This Pectobacterium carotovorum subsp. carotovorum (strain PC1) protein is Enolase-phosphatase E1.